A 405-amino-acid chain; its full sequence is Deoxyguanosinetriphosphate triphosphohydrolase-like protein (405 aa).

The HD domain maps to 75 to 219 (RLTHTIEVAQ…AAIADDIAYN (145 aa)).

This sequence belongs to the dGTPase family. Type 2 subfamily.

This is Deoxyguanosinetriphosphate triphosphohydrolase-like protein from Rhizobium etli (strain CIAT 652).